The primary structure comprises 203 residues: Peptidyl-tRNA hydrolase (203 aa).

Y14 contributes to the tRNA binding site. H19 acts as the Proton acceptor in catalysis. The tRNA site is built by Y64, N66, and N112.

The protein belongs to the PTH family. As to quaternary structure, monomer.

The protein localises to the cytoplasm. The enzyme catalyses an N-acyl-L-alpha-aminoacyl-tRNA + H2O = an N-acyl-L-amino acid + a tRNA + H(+). Hydrolyzes ribosome-free peptidyl-tRNAs (with 1 or more amino acids incorporated), which drop off the ribosome during protein synthesis, or as a result of ribosome stalling. Its function is as follows. Catalyzes the release of premature peptidyl moieties from peptidyl-tRNA molecules trapped in stalled 50S ribosomal subunits, and thus maintains levels of free tRNAs and 50S ribosomes. This is Peptidyl-tRNA hydrolase from Methylobacterium sp. (strain 4-46).